The following is a 542-amino-acid chain: CTP synthase (542 aa).

The interval 1–265 (MARYVFITGG…DSEVLAAFGI (265 aa)) is amidoligase domain. Position 13 (Ser13) interacts with CTP. Ser13 provides a ligand contact to UTP. ATP is bound by residues 14-19 (SLGKGI) and Asp71. The Mg(2+) site is built by Asp71 and Glu139. CTP is bound by residues 146–148 (DIE), 186–191 (KTKPTQ), and Lys222. UTP is bound by residues 186-191 (KTKPTQ) and Lys222. Residues 291-541 (TIAIVGKYTG…VEAAVEQSRL (251 aa)) form the Glutamine amidotransferase type-1 domain. Gly353 is an L-glutamine binding site. Cys380 serves as the catalytic Nucleophile; for glutamine hydrolysis. L-glutamine contacts are provided by residues 381 to 384 (FGMQ), Glu404, and Arg469. Residues His514 and Glu516 contribute to the active site.

Belongs to the CTP synthase family. In terms of assembly, homotetramer.

It catalyses the reaction UTP + L-glutamine + ATP + H2O = CTP + L-glutamate + ADP + phosphate + 2 H(+). The catalysed reaction is L-glutamine + H2O = L-glutamate + NH4(+). It carries out the reaction UTP + NH4(+) + ATP = CTP + ADP + phosphate + 2 H(+). It participates in pyrimidine metabolism; CTP biosynthesis via de novo pathway; CTP from UDP: step 2/2. With respect to regulation, allosterically activated by GTP, when glutamine is the substrate; GTP has no effect on the reaction when ammonia is the substrate. The allosteric effector GTP functions by stabilizing the protein conformation that binds the tetrahedral intermediate(s) formed during glutamine hydrolysis. Inhibited by the product CTP, via allosteric rather than competitive inhibition. Its function is as follows. Catalyzes the ATP-dependent amination of UTP to CTP with either L-glutamine or ammonia as the source of nitrogen. Regulates intracellular CTP levels through interactions with the four ribonucleotide triphosphates. This Agrobacterium fabrum (strain C58 / ATCC 33970) (Agrobacterium tumefaciens (strain C58)) protein is CTP synthase.